We begin with the raw amino-acid sequence, 130 residues long: Small ribosomal subunit protein uS8 (130 aa).

This sequence belongs to the universal ribosomal protein uS8 family. Part of the 30S ribosomal subunit.

Functionally, one of the primary rRNA binding proteins, it binds directly to 16S rRNA central domain where it helps coordinate assembly of the platform of the 30S subunit. The chain is Small ribosomal subunit protein uS8 from Methanococcus aeolicus (strain ATCC BAA-1280 / DSM 17508 / OCM 812 / Nankai-3).